A 124-amino-acid chain; its full sequence is Hydrogenase maturation factor HypA (124 aa).

A Ni(2+)-binding site is contributed by His-2. Residues Cys-78, Cys-81, Cys-97, and Cys-100 each contribute to the Zn(2+) site.

It belongs to the HypA/HybF family.

Involved in the maturation of [NiFe] hydrogenases. Required for nickel insertion into the metal center of the hydrogenase. This is Hydrogenase maturation factor HypA from Methanococcus vannielii (strain ATCC 35089 / DSM 1224 / JCM 13029 / OCM 148 / SB).